The following is a 112-amino-acid chain: MIASIGDSAEPPLRRTRRAQQQDRPPTQLAAAEMLHNMNGAETAASFIVKDASENKIASLTTLGNQSIAARKLVESLQAGAPTIKLNREDTVNVLKFLNDVYTNQLEVVNIS.

The segment at 1–27 (MIASIGDSAEPPLRRTRRAQQQDRPPT) is disordered.

This is an uncharacterized protein from Orgyia pseudotsugata multicapsid polyhedrosis virus (OpMNPV).